Here is a 453-residue protein sequence, read N- to C-terminus: uncharacterized protein (453 aa).

Residues 276-437 (IAQTKQIKAL…TKQIVRGSST (162 aa)) form the YrdC-like domain.

This is an uncharacterized protein from Mycoplasma pneumoniae (strain ATCC 29342 / M129 / Subtype 1) (Mycoplasmoides pneumoniae).